The primary structure comprises 275 residues: Gibberellin-regulated protein 14 (275 aa).

The N-terminal stretch at 1–21 is a signal peptide; that stretch reads MALSLLSVFIFFHVFTNVVFA. Residues 34 to 207 are disordered; it reads PTPTLPSPSP…TAPPVKPPTP (174 aa). Residues 36–207 show a composition bias toward pro residues; that stretch reads PTLPSPSPAT…TAPPVKPPTP (172 aa).

This sequence belongs to the GASA family. Post-translationally, six disulfide bonds may be present. As to expression, expressed in flower abscission zone, style, stamen filaments and lateral roots.

Its subcellular location is the secreted. Its function is as follows. Gibberellin-regulated protein that may function in hormonal controlled steps of development such as seed germination, flowering and seed maturation. In Arabidopsis thaliana (Mouse-ear cress), this protein is Gibberellin-regulated protein 14 (GASA14).